Reading from the N-terminus, the 397-residue chain is 1-carboxy-3-chloro-3,4-dihydroxycyclo hexa-1,5-diene dehydrogenase (397 aa).

It to P.putida PHT4.

In Comamonas testosteroni (Pseudomonas testosteroni), this protein is 1-carboxy-3-chloro-3,4-dihydroxycyclo hexa-1,5-diene dehydrogenase (cbaC).